Consider the following 160-residue polypeptide: 6,7-dimethyl-8-ribityllumazine synthase (160 aa).

Residues Phe23, 61–63, and 85–87 contribute to the 5-amino-6-(D-ribitylamino)uracil site; these read SFE and AVI. Residue 90-91 coordinates (2S)-2-hydroxy-3-oxobutyl phosphate; that stretch reads DT. The Proton donor role is filled by His93. Phe118 contributes to the 5-amino-6-(D-ribitylamino)uracil binding site. (2S)-2-hydroxy-3-oxobutyl phosphate is bound at residue Arg132.

Belongs to the DMRL synthase family.

It carries out the reaction (2S)-2-hydroxy-3-oxobutyl phosphate + 5-amino-6-(D-ribitylamino)uracil = 6,7-dimethyl-8-(1-D-ribityl)lumazine + phosphate + 2 H2O + H(+). Its pathway is cofactor biosynthesis; riboflavin biosynthesis; riboflavin from 2-hydroxy-3-oxobutyl phosphate and 5-amino-6-(D-ribitylamino)uracil: step 1/2. Catalyzes the formation of 6,7-dimethyl-8-ribityllumazine by condensation of 5-amino-6-(D-ribitylamino)uracil with 3,4-dihydroxy-2-butanone 4-phosphate. This is the penultimate step in the biosynthesis of riboflavin. The chain is 6,7-dimethyl-8-ribityllumazine synthase from Synechococcus sp. (strain CC9605).